The sequence spans 341 residues: Glycerol-3-phosphate dehydrogenase [NAD(P)+] (341 aa).

The NADPH site is built by serine 13, tryptophan 14, and lysine 108. Residues lysine 108, glycine 139, and serine 141 each coordinate sn-glycerol 3-phosphate. Alanine 143 is an NADPH binding site. Sn-glycerol 3-phosphate-binding residues include lysine 194, aspartate 247, serine 257, arginine 258, and asparagine 259. Lysine 194 serves as the catalytic Proton acceptor. Position 258 (arginine 258) interacts with NADPH. NADPH contacts are provided by valine 282 and glutamate 284.

It belongs to the NAD-dependent glycerol-3-phosphate dehydrogenase family.

It localises to the cytoplasm. It carries out the reaction sn-glycerol 3-phosphate + NAD(+) = dihydroxyacetone phosphate + NADH + H(+). It catalyses the reaction sn-glycerol 3-phosphate + NADP(+) = dihydroxyacetone phosphate + NADPH + H(+). It functions in the pathway membrane lipid metabolism; glycerophospholipid metabolism. Its function is as follows. Catalyzes the reduction of the glycolytic intermediate dihydroxyacetone phosphate (DHAP) to sn-glycerol 3-phosphate (G3P), the key precursor for phospholipid synthesis. This Lactococcus lactis subsp. lactis (strain IL1403) (Streptococcus lactis) protein is Glycerol-3-phosphate dehydrogenase [NAD(P)+].